The primary structure comprises 685 residues: Polyphosphate kinase (685 aa).

Asn-45 provides a ligand contact to ATP. 2 residues coordinate Mg(2+): Arg-372 and Arg-402. A PLD phosphodiesterase 1 domain is found at 427–461 (PGLKIHAKLFLISRKEGDDVVRYAHIGTGNFNEKT). His-432 (phosphohistidine intermediate) is an active-site residue. Residues Tyr-465, Arg-561, and His-589 each contribute to the ATP site. In terms of domain architecture, PLD phosphodiesterase 2 spans 584-614 (DRYLEHDRIYIFDNAGDKQVYLSSADWMTRN).

The protein belongs to the polyphosphate kinase 1 (PPK1) family. Mg(2+) is required as a cofactor. Post-translationally, an intermediate of this reaction is the autophosphorylated ppk in which a phosphate is covalently linked to a histidine residue through a N-P bond.

The enzyme catalyses [phosphate](n) + ATP = [phosphate](n+1) + ADP. Catalyzes the reversible transfer of the terminal phosphate of ATP to form a long-chain polyphosphate (polyP). This Klebsiella pneumoniae protein is Polyphosphate kinase.